The primary structure comprises 125 residues: Ly6/PLAUR domain-containing protein 2 (125 aa).

The signal sequence occupies residues 1–22 (MRGTRLALLALVLAACGELAPA). The UPAR/Ly6 domain occupies 25–100 (CYVCPEPTGV…VSCCNTELCN (76 aa)). An N-linked (GlcNAc...) asparagine glycan is attached at asparagine 46. Glycine 103 is lipidated: GPI-anchor amidated glycine. Residues 104-125 (APALNSLHCGALTLLPLLSLRL) constitute a propeptide, removed in mature form.

It localises to the cell membrane. This Homo sapiens (Human) protein is Ly6/PLAUR domain-containing protein 2 (LYPD2).